The primary structure comprises 417 residues: Odorant receptor Or1 (417 aa).

Residues 1–2 (MK) lie on the Cytoplasmic side of the membrane. Residues 3 to 23 (LNKLNPRWDAYDRRDSFWLQL) form a helical membrane-spanning segment. Residues 24–45 (LCLKYLGLWPPEDTDQATRNRY) lie on the Extracellular side of the membrane. Residues 46–66 (IAYGWALRIMFLHLYALTQAL) form a helical membrane-spanning segment. Topologically, residues 67 to 73 (YFKDVKD) are cytoplasmic. A helical transmembrane segment spans residues 74–94 (INDIANALFVLMTQVTLIYKL). Residues 95-133 (EKFNYNIARIQACLRKLNCTLYHPKQREEFSPVLQSMSG) are Extracellular-facing. N-linked (GlcNAc...) asparagine glycosylation occurs at Asn-112. The helical transmembrane segment at 134-154 (VFWLMIFLMFVAIFTIIMWVM) threads the bilayer. Residues 155–178 (SPAFDNERRLPVPAWFPVDYHHSD) lie on the Cytoplasmic side of the membrane. The helical transmembrane segment at 179-199 (IVYGVLFLYQTIGIVMSATYN) threads the bilayer. At 200 to 284 (FSTDTMFSGL…ILSFGDEVQD (85 aa)) the chain is on the extracellular side. A helical membrane pass occupies residues 285–305 (IFQGSIFAQVCASVIIICMTL). Residues 306–317 (LQATGDDVTMAD) lie on the Cytoplasmic side of the membrane. Residues 318–338 (LLGCGFYLLVMTSQVFIFCYV) form a helical membrane-spanning segment. Residues 339–417 (GNEISYTTDK…LAVLQSMESE (79 aa)) are Extracellular-facing.

It belongs to the insect chemoreceptor superfamily. Heteromeric odorant receptor channel (TC 1.A.69) family. Or2a subfamily. Female-specific antennae and maxillary palp expression.

It localises to the cell membrane. In terms of biological role, odorant receptor which plays a critical role in the anthropophilic host-seeking behavior; establishes the host preference to transmit malaria. May participate in the phenomenon of decreased host-seeking behavior in disease vector mosquitoes after blood feeding. In Anopheles gambiae (African malaria mosquito), this protein is Odorant receptor Or1 (OR1).